Reading from the N-terminus, the 410-residue chain is ORC1-type DNA replication protein 2 (410 aa).

ATP contacts are provided by residues glycine 60–threonine 65, tyrosine 213, and arginine 225.

The protein belongs to the CDC6/cdc18 family.

Its function is as follows. Involved in regulation of DNA replication. Binds DNA. The chain is ORC1-type DNA replication protein 2 (orc2) from Aeropyrum pernix (strain ATCC 700893 / DSM 11879 / JCM 9820 / NBRC 100138 / K1).